We begin with the raw amino-acid sequence, 229 residues long: MAKKKAFTPLFYLASIVFLPWWISFSVNKCLESWVTNWWNTGQSEIFLNNIQEKSLLEKFIELEELLFLDEMIKEYSETHLEEFGIGIHKETIQLIKIQNENRIHTILHFSTNIICFIILSGYSILGNEKLVILNSWAQEFLYNLSDTVKAFSILLLTDLCIGFHSPHGWELMIGSIYKDFGFVHNDQIISGLVSTFPVILDTIFKYWIFRYLNRLSPSLVVIYHSMND.

3 helical membrane-spanning segments follow: residues Phe-7–Val-27, Ile-107–Gly-127, and Ile-189–Ile-209.

It belongs to the CemA family.

The protein resides in the plastid. The protein localises to the chloroplast inner membrane. It carries out the reaction K(+)(in) + H(+)(out) = K(+)(out) + H(+)(in). Functionally, contributes to K(+)/H(+) antiport activity by supporting proton efflux to control proton extrusion and homeostasis in chloroplasts in a light-dependent manner to modulate photosynthesis. Prevents excessive induction of non-photochemical quenching (NPQ) under continuous-light conditions. Indirectly promotes efficient inorganic carbon uptake into chloroplasts. The chain is Potassium/proton antiporter CemA from Nicotiana sylvestris (Wood tobacco).